The sequence spans 721 residues: Centlein (721 aa).

Residues 52 to 164 adopt a coiled-coil conformation; the sequence is KNEKAISEQT…LRDENEEVVN (113 aa). 2 disordered regions span residues 156–180 and 259–288; these read RDEN…KSEM and ETSQ…QQEV. Composition is skewed to basic and acidic residues over residues 165–178 and 267–284; these read PEEK…KAKS and IEND…DSRA. 2 coiled-coil regions span residues 345–515 and 573–626; these read LLRE…EDLK and QSEQ…TQKS. Thr-658 is modified (phosphothreonine).

In terms of assembly, interacts with CEP250 and CEP68. Interacts with NEK2; the interaction leads to phosphorylation of CNTLN. In terms of processing, phosphorylated directly or indirectly by NEK2.

Its subcellular location is the cytoplasm. The protein resides in the cytoskeleton. It is found in the microtubule organizing center. The protein localises to the centrosome. It localises to the centriole. In terms of biological role, required for centrosome cohesion and recruitment of CEP68 to centrosomes. The protein is Centlein of Rattus norvegicus (Rat).